Consider the following 384-residue polypeptide: UPF0284 protein alr0297 (384 aa).

Belongs to the UPF0284 family.

This is UPF0284 protein alr0297 from Nostoc sp. (strain PCC 7120 / SAG 25.82 / UTEX 2576).